Consider the following 203-residue polypeptide: Peptidyl-tRNA hydrolase (203 aa).

Y26 is a binding site for tRNA. The active-site Proton acceptor is H31. Residues Y82, N84, and N130 each contribute to the tRNA site.

Belongs to the PTH family. As to quaternary structure, monomer.

It is found in the cytoplasm. The catalysed reaction is an N-acyl-L-alpha-aminoacyl-tRNA + H2O = an N-acyl-L-amino acid + a tRNA + H(+). Hydrolyzes ribosome-free peptidyl-tRNAs (with 1 or more amino acids incorporated), which drop off the ribosome during protein synthesis, or as a result of ribosome stalling. Functionally, catalyzes the release of premature peptidyl moieties from peptidyl-tRNA molecules trapped in stalled 50S ribosomal subunits, and thus maintains levels of free tRNAs and 50S ribosomes. The polypeptide is Peptidyl-tRNA hydrolase (Streptomyces avermitilis (strain ATCC 31267 / DSM 46492 / JCM 5070 / NBRC 14893 / NCIMB 12804 / NRRL 8165 / MA-4680)).